Consider the following 2073-residue polypeptide: Non-reducing polyketide synthase cla3 (2073 aa).

The N-terminal acylcarrier protein transacylase domain (SAT) stretch occupies residues 9–242; the sequence is LLFGDYTEPW…EKLNIHALQH (234 aa). A Ketosynthase family 3 (KS3) domain is found at 363–793; sequence SGRIAIVGMS…GGNGCLLLEE (431 aa). Catalysis depends on for beta-ketoacyl synthase activity residues Cys538, His673, and His712. Residues 898 to 1198 form a malonyl-CoA:ACP transacylase (MAT) domain region; sequence TFTGQGSQYA…KIMSTLDATG (301 aa). Ser987 serves as the catalytic For acyl/malonyl transferase activity. Residues 1276–1590 are product template (PT) domain; the sequence is STCAQYVITE…QNVILERLLG (315 aa). Residues 1279–1420 are N-terminal hotdog fold; sequence AQYVITETKT…AGLESQWEKS (142 aa). One can recognise a PKS/mFAS DH domain in the interval 1279–1586; the sequence is AQYVITETKT…FHRVQNVILE (308 aa). The active-site Proton acceptor; for dehydratase activity is His1311. The C-terminal hotdog fold stretch occupies residues 1439-1586; it reads QGHRIQRDIY…FHRVQNVILE (148 aa). The Proton donor; for dehydratase activity role is filled by Asp1500. The segment at 1594 to 1637 is disordered; that stretch reads SSSVPAQASDPLRSKRSPQEARSLPGEAKTEKPGSTIATTSPVL. The 78-residue stretch at 1641–1718 folds into the Carrier domain; it reads KSEQGMFQAL…NLRCAFDEDV (78 aa). Ser1678 is subject to O-(pantetheine 4'-phosphoryl)serine. The span at 1721–1738 shows a compositional bias: polar residues; sequence EFTDSEVTSGTPNSSESV. The interval 1721-1786 is disordered; the sequence is EFTDSEVTSG…GVLDDGSPQP (66 aa). Residues 1747–1774 are compositionally biased toward basic and acidic residues; it reads PEEHAFKEPKDDSPLARRDMDNSNDRSL. Residues 1805–1950 form a thioesterase (TE) domain region; the sequence is FLIADGSGSI…MQQHLRAIFK (146 aa). His2058 acts as the For thioesterase activity in catalysis.

It functions in the pathway secondary metabolite biosynthesis. Its function is as follows. Highly reducing polyketide synthase; part of the gene cluster that mediates the biosynthesis of cladosporin, a tricyclic octaketide that acts as an antimalarial agent though inhibition of the Plasmodium falciparum lysyl-tRNA synthetase. The highly reducing polyketide synthase cla2 is responsible for biosynthesis up to the pentaketide stage, including of the tetrahydropyran (THP) ring, whereas the three subsequent ketide extensions with no reduction are catalyzed by the non-reducing polyketide synthase cla3. This is Non-reducing polyketide synthase cla3 from Cladosporium cladosporioides.